A 141-amino-acid polypeptide reads, in one-letter code: Endoribonuclease YbeY (141 aa).

The Zn(2+) site is built by His-107, His-111, and His-117.

It belongs to the endoribonuclease YbeY family. The cofactor is Zn(2+).

Its subcellular location is the cytoplasm. Single strand-specific metallo-endoribonuclease involved in late-stage 70S ribosome quality control and in maturation of the 3' terminus of the 16S rRNA. This chain is Endoribonuclease YbeY, found in Leptospira interrogans serogroup Icterohaemorrhagiae serovar Lai (strain 56601).